A 495-amino-acid chain; its full sequence is 1-aminocyclopropane-1-carboxylate synthase 6 (495 aa).

Substrate is bound by residues glutamate 58 and tyrosine 96. Position 280 is an N6-(pyridoxal phosphate)lysine (lysine 280). 3 positions are modified to phosphoserine: serine 480, serine 483, and serine 488.

The protein belongs to the class-I pyridoxal-phosphate-dependent aminotransferase family. As to quaternary structure, homodimer and heterodimer. In vivo, the relevance of heterodimerization with other ACS enzymes is however unsure. Interacts with GRF3. Pyridoxal 5'-phosphate serves as cofactor. Phosphorylated on serine residue by MAP kinase (MPK6). Post-translationally, may be processed at its C-terminus. As to expression, expressed in roots and flowers.

It carries out the reaction S-adenosyl-L-methionine = 1-aminocyclopropane-1-carboxylate + S-methyl-5'-thioadenosine + H(+). It participates in alkene biosynthesis; ethylene biosynthesis via S-adenosyl-L-methionine; ethylene from S-adenosyl-L-methionine: step 1/2. 1-aminocyclopropane-1-carboxylate synthase (ACS) enzymes catalyze the conversion of S-adenosyl-L-methionine (SAM) into 1-aminocyclopropane-1-carboxylate (ACC), a direct precursor of ethylene. Involved in bacterial flagellin-induced ethylene production. This chain is 1-aminocyclopropane-1-carboxylate synthase 6 (ACS6), found in Arabidopsis thaliana (Mouse-ear cress).